A 131-amino-acid polypeptide reads, in one-letter code: Meiotically up-regulated gene 115 protein (131 aa).

The protein localises to the mitochondrion. It is found in the nucleus. Has a role in meiosis. This chain is Meiotically up-regulated gene 115 protein (mug115), found in Schizosaccharomyces pombe (strain 972 / ATCC 24843) (Fission yeast).